A 666-amino-acid chain; its full sequence is tRNA 5-methylaminomethyl-2-thiouridine biosynthesis bifunctional protein MnmC (666 aa).

The tRNA (mnm(5)s(2)U34)-methyltransferase stretch occupies residues 1-245; the sequence is MKQYAIQPAT…KREMLCGVME (245 aa). The tract at residues 270 to 666 is FAD-dependent cmnm(5)s(2)U34 oxidoreductase; it reads IGGGIASALL…RKLLKGKAVK (397 aa).

This sequence in the N-terminal section; belongs to the methyltransferase superfamily. tRNA (mnm(5)s(2)U34)-methyltransferase family. In the C-terminal section; belongs to the DAO family. Requires FAD as cofactor.

Its subcellular location is the cytoplasm. It catalyses the reaction 5-aminomethyl-2-thiouridine(34) in tRNA + S-adenosyl-L-methionine = 5-methylaminomethyl-2-thiouridine(34) in tRNA + S-adenosyl-L-homocysteine + H(+). Its function is as follows. Catalyzes the last two steps in the biosynthesis of 5-methylaminomethyl-2-thiouridine (mnm(5)s(2)U) at the wobble position (U34) in tRNA. Catalyzes the FAD-dependent demodification of cmnm(5)s(2)U34 to nm(5)s(2)U34, followed by the transfer of a methyl group from S-adenosyl-L-methionine to nm(5)s(2)U34, to form mnm(5)s(2)U34. This is tRNA 5-methylaminomethyl-2-thiouridine biosynthesis bifunctional protein MnmC from Salmonella paratyphi A (strain ATCC 9150 / SARB42).